The sequence spans 679 residues: Altered inheritance of mitochondria protein 21 (679 aa).

Residues 1–85 (MPSEVTPKVP…LQRPVRRSTT (85 aa)) form a disordered region. Residues 9–19 (VPERPSRRKTS) show a composition bias toward basic and acidic residues. A Phosphothreonine modification is found at Thr-18. Position 36 is a phosphoserine (Ser-36). A Phosphothreonine modification is found at Thr-58. Phosphoserine is present on Ser-70. Thr-85 bears the Phosphothreonine mark. Position 104 is a phosphoserine (Ser-104). The segment covering 110–119 (NIHNVSRKKS) has biased composition (basic residues). Disordered regions lie at residues 110-522 (NIHN…EKIE), 549-580 (IDTT…PNKM), and 593-679 (EKLP…FHSL). Composition is skewed to polar residues over residues 133–149 (QNGQ…TNPS) and 164–178 (SAIS…SNNE). Positions 179 to 213 (VTEHSDSEDLTEKQKVHAALDNEAGDRSHFEEKLI) are enriched in basic and acidic residues. A phosphoserine mark is found at Ser-183, Ser-206, and Ser-231. Basic and acidic residues predominate over residues 243-272 (SDDKAEKFTKHPESSLEELQKHQEQQEEKI). Thr-277 is subject to Phosphothreonine. Ser-284 bears the Phosphoserine mark. Residues 296-323 (EVNSQPQGPSDTETVIAATSSNVPSQIA) show a composition bias toward polar residues. Ser-324 carries the post-translational modification Phosphoserine. Basic and acidic residues-rich tracts occupy residues 339–361 (KKDF…RVSE) and 372–383 (EESKIPKIPSER). Residues 383 to 396 (RPKRRAPPPVPKKP) form an interaction with SH3 domain of ABP1 region. Polar residues-rich tracts occupy residues 414-427 (DLHN…TTAS) and 437-452 (SSIT…TSKL). The span at 471–482 (LEKKLSSPDTES) shows a compositional bias: basic and acidic residues. The segment covering 501-512 (RRGRGPRGRKLP) has biased composition (basic residues). Position 552 is a phosphothreonine (Thr-552). Residues 556-576 (QAERALDEKSKSIPEEQREQS) show a composition bias toward basic and acidic residues. Position 576 is a phosphoserine (Ser-576). The segment covering 603 to 613 (PLSQLPQTNAV) has biased composition (polar residues). Residues Ser-620, Ser-623, Ser-625, Ser-627, Ser-667, Ser-671, Ser-675, and Ser-678 each carry the phosphoserine modification. Basic and acidic residues predominate over residues 667–679 (SALHSEEASFHSL).

The protein belongs to the AIM21 family. As to quaternary structure, interacts with ribosomes. Interacts with ABP1.

The protein localises to the cytoplasm. The protein resides in the cytoskeleton. Its subcellular location is the actin patch. Functionally, involved in mitochondrial migration along actin filaments. This is Altered inheritance of mitochondria protein 21 (AIM21) from Saccharomyces cerevisiae (strain ATCC 204508 / S288c) (Baker's yeast).